Reading from the N-terminus, the 147-residue chain is Large ribosomal subunit protein uL15 (147 aa).

A disordered region spans residues Met-1 to Met-55. The span at Ile-23 to Met-35 shows a compositional bias: gly residues.

Belongs to the universal ribosomal protein uL15 family. Part of the 50S ribosomal subunit.

Its function is as follows. Binds to the 23S rRNA. This is Large ribosomal subunit protein uL15 from Synechococcus elongatus (strain ATCC 33912 / PCC 7942 / FACHB-805) (Anacystis nidulans R2).